We begin with the raw amino-acid sequence, 413 residues long: MHSTTRREWLGAIGATAATGLAGCAGVGGAGQPVTVGSLLPLSGPGSLGALAADHQRAIDTAVEHANRGGGINGRDVVHVSKDTEADPSVAADRYATLAADESPLAIVGPVLSGVTTALTEQAAADAQLLVSPSTTAPAIATAGRSDGQKFVARTCPNDSQQAAVMAKIVDDDMYAAADTATILYVDNAFGAALADVLADRLGADLLASVPYQGGTDTPGGPVDDALAPDPDAVAFIGSPGSSSGVIDELVGREYGGEIALSSALASASSPPSWNGAYTATVNSASTVGTKRLRRALSDATPLQPYTENAYDAAALALLAASYSGDPTPRAVAGALQSVSGGVGHSITVGDFGRATDLIDAGRELNYNGATGNVDLTAALEPVTGYLIQQLTDAGIETRELLKSGYFTDGGDA.

A signal peptide spans 1–31 (MHSTTRREWLGAIGATAATGLAGCAGVGGAG).

It is found in the cell membrane. Its function is as follows. Mediates chemotaxis towards five attractant amino acids (leucine, isoleucine, valine, methionine and cysteine). May function as a receptor that binds the amino acids and transduces a signal to BasT. Has probably no additional role in transport. The sequence is that of Chemotactic signal transduction system substrate-binding protein BasB (basB) from Halobacterium salinarum (strain ATCC 29341 / DSM 671 / R1).